The chain runs to 578 residues: NADPH oxidase 4 (578 aa).

Topologically, residues 1–16 are cytoplasmic; it reads MALSWRSWLANEGVKH. A helical membrane pass occupies residues 17–37; it reads LCLLVWLSLNVLLFWKTFLLY. Residues 38-62 lie on the Extracellular side of the membrane; it reads NQGPEYYYIHQMLGLGLCLSRASAS. A Ferric oxidoreductase domain is found at 58 to 303; the sequence is RASASVLNLN…YCAERLYRCI (246 aa). A helical membrane pass occupies residues 63 to 83; that stretch reads VLNLNCSLILLPMCRTVLAYL. Over 84–104 the chain is Cytoplasmic; the sequence is RGSQKVPSRRTRRLLDKSKTL. A helical membrane pass occupies residues 105-125; that stretch reads HITCGITICIFSGVHVAAHLV. The Extracellular portion of the chain corresponds to 126 to 154; it reads NALNFSVNYSEHFLALNAARYQNEDPRKL. An N-linked (GlcNAc...) asparagine glycan is attached at Asn-133. A helical transmembrane segment spans residues 155–175; the sequence is LFTTVPGLTGVCMVVVLFLMV. Residues 176–188 lie on the Cytoplasmic side of the membrane; sequence TASTYAIRVSNYD. The helical transmembrane segment at 189–209 threads the bilayer; it reads IFWYTHNLFFVFYMLLLLHVS. Residues 210-424 are Extracellular-facing; that stretch reads GGLLKYQTNL…SPFEESLNYE (215 aa). The interval 218–273 is E-loop; essential for H2O2 generating catalytic activity; sequence NLDTHPPGCISLNRTPSQNMSIADYVSEHFHGSLPGGFSKLEDHYQKTLVKICLEE. Positions 248-575 are mediates interaction with TLR4; it reads HGSLPGGFSK…YGTKFEYNKE (328 aa). The FAD-binding FR-type domain maps to 304 to 419; sequence RSNKPVTIIS…DGPFGSPFEE (116 aa). The helical transmembrane segment at 425 to 445 threads the bilayer; it reads VSLCVAGGIGVTPFASILNTL. At 446–578 the chain is on the cytoplasmic side; that stretch reads LDDWKPYKLR…KFEYNKESFS (133 aa).

In terms of assembly, interacts with TLR4. Interacts with, relocalizes and stabilizes CYBA/p22phox. Interacts with protein disulfide isomerase. Interacts with PPP1R15A. Interacts with LRRC8A; this interaction prevents the ubiquitin-mediated degradation of LRRC8A. It depends on heme as a cofactor. In terms of processing, N-glycosylation is required for the function. In terms of tissue distribution, expressed in vascular smooth muscle.

The protein localises to the cytoplasm. It localises to the endoplasmic reticulum membrane. The protein resides in the cell membrane. Its subcellular location is the cell junction. It is found in the focal adhesion. The protein localises to the nucleus. It catalyses the reaction NADPH + 2 O2 = 2 superoxide + NADP(+) + H(+). It carries out the reaction NADPH + O2 + H(+) = H2O2 + NADP(+). Its activity is regulated as follows. Activated by insulin. Inhibited by diphenylene iodonium. Inhibited by plumbagin. Activated by phorbol 12-myristate 13-acetate (PMA). In terms of biological role, NADPH oxidase that catalyzes predominantly the reduction of oxygen to H2O2. Can also catalyze to a smaller extent, the reduction of oxygen to superoxide. May function as an oxygen sensor regulating the KCNK3/TASK-1 potassium channel and HIF1A activity. May regulate insulin signaling cascade. May play a role in apoptosis, bone resorption and lipolysaccharide-mediated activation of NFKB. May produce superoxide in the nucleus and play a role in regulating gene expression upon cell stimulation. Promotes ferroptosis, reactive oxygen species production and reduced glutathione (GSH) levels by activating NLRP3 inflammasome activation and cytokine release. The chain is NADPH oxidase 4 (Nox4) from Rattus norvegicus (Rat).